The chain runs to 360 residues: DNA replication and repair protein RecF (360 aa).

33-40 (GENGSGKT) is a binding site for ATP.

The protein belongs to the RecF family.

It localises to the cytoplasm. Functionally, the RecF protein is involved in DNA metabolism; it is required for DNA replication and normal SOS inducibility. RecF binds preferentially to single-stranded, linear DNA. It also seems to bind ATP. The protein is DNA replication and repair protein RecF of Rickettsia peacockii (strain Rustic).